A 206-amino-acid polypeptide reads, in one-letter code: LOB domain-containing protein 2 (206 aa).

The tract at residues 1-20 is disordered; the sequence is MMQRNSNNTSITSNISNNSS. Residues 23 to 123 form the LOB domain; the sequence is QACASCKHQR…KSLVHNQPLI (101 aa).

This sequence belongs to the LOB domain-containing protein family.

In Arabidopsis thaliana (Mouse-ear cress), this protein is LOB domain-containing protein 2 (LBD2).